A 1294-amino-acid polypeptide reads, in one-letter code: MAQPPLLRDVIDIKESISTSDFVLSLAEATTPAGAQHALRDYVVTERLLENFDEALALIKSSLDGHRSKAAYLHGSFGSGKSHFMAVLYALLSGDQAARARTEFDPVLTKHQWLSTDGKKFLLVPYHMLGAKALEQRVLGGYVTHVKKLCPEAPTPQVYRTDSLFADIRAMRANMGDEAVIRALGTSGADDAEEDEWGEGFAWTPQLLDTALAAEESHEAGVHLNLTNPSTPAELRAKLVNDAGTNLLPGFTQNAAEDEHGFISLDAGLSVIAEHAKSLGYDGLILFMDELILWLATLIHDQKFVAREASKITNFVEGGDARRAIPVMSFIARQRDLRELVGEEVSGAAESSIQDTLNLASGRFDKITLEDRKLPQIAHARLLKPKDAEAAQQVDAAFEQTKRVGPQVWDTLLGSEKGTTGADAESFRLTYPFSPAFMDTLVHISSALQRSRTGLKLMGQLLADHRDELRLGQLVPVGDLYPVIAQGGDKPFTDSLKVVFEAADKLYKTKLRPYLLSSYDITEDDVEQYRNRPESLTDPKKLNGCRMFTGDNRLVCTLLLSALAPSVPALSELTIRRLGALNHGSVLAPIPGAEVGIIKNKVAEWAARFPEIKETGTDANPGVRLELSGVDVDSVIANAQVNDNPGNRVALARRLLSEELGVEHGQLSDQLGFTWRGTARTAEIVFGNVADEDELPDHDLMPQEEGRWRIAIDLPFDEGEWGPVEDVNRVQRLRERQQGERSRTIAWLPAHLSATRFADFRRLVVIDKALADEHRFDTQYAGHLNADNRSRAKGLLETQREALLKQAKGAFKQAYGLAQKQAADVVPDFDDHLVALPDVDGLTLSFGQSLHDGIRHVAGKLLTHQYPAHPDLDPDATGTAVKPADTKKVFAHVRAAAEARDGRIEVPAADRKLMQRIAGPLRLGQQKEAYFELSRYWGDHFRQLARSQGVTGDLSLITLTDWTDRPDPRGLPDFLARLVVAAFAEMDDRVWVRGGTVLDPAPELAAIKDHDALRSQPLPAESDWDTARQRFETVFGAKPPALRRGRMVNQFARQIIEAARDYRDHAADLVHQLEAHASFLGLDQTADTGRLALARRSLQLLDALTAEAGKGAAGAKKTVEALASFDLGETSADRYGTSIKKARAVAEAVASAPWSTLELAAGLGPEGEALLDSLRNVARDDQRTADLRDALARTQREVVALIKRTQAAATPPPAPAASQPTAGDLSLDTPTSDPRIPYTSQETPTSSGGAGTARTSGGRRTTAARAVTDLQAELSDLAVRHPEATIEITWRVVE.

The interval 1205-1263 (TQAAATPPPAPAASQPTAGDLSLDTPTSDPRIPYTSQETPTSSGGAGTARTSGGRRTTA) is disordered. Residues 1228 to 1244 (DTPTSDPRIPYTSQETP) show a composition bias toward polar residues. Over residues 1252–1263 (TARTSGGRRTTA) the composition is skewed to low complexity.

In terms of biological role, BREX systems (bacteriophage exclusion) provide immunity against bacteriophage. Part of a type 2 BREX system. Previously called the phage growth limitation (Pgl) system, it confers protection against bacteriophage phiC31. The bacteria allows one cycle of phage infection, but subsequent cycles are impaired, protecting the original bacterial colony. The system undergoes high rates (10(-3) to 10(-4)) of phase reversion, i.e. loss and regain of phiC31 resistance. When the pglW-pglX-pglY-pglZ genes are transformed into a susceptible S.lividans (strain 1326) they confer resistance to infection by phage phiC31 and phiBT1; all 4 genes are necessary. Its function is as follows. Hydrolyzes ATP but not AMP, ADP, GMP, GDP or GTP; activity is inhibited by the non-hydrolyzable ATP analog 5-adenylyl beta,gamma-imidodiphosphate. This chain is ATPase PglY, found in Streptomyces coelicolor (strain ATCC BAA-471 / A3(2) / M145).